Consider the following 489-residue polypeptide: Ketol-acid reductoisomerase (NADP(+)) (489 aa).

The region spanning 16–207 (LRKCKLVEKN…GSHRAGVLHS (192 aa)) is the KARI N-terminal Rossmann domain. NADP(+) is bound by residues 44–47 (CGSQ), R67, S77, and 107–109 (DKQ). H131 is a catalytic residue. G157 serves as a coordination point for NADP(+). KARI C-terminal knotted domains follow at residues 208-343 (SFIA…KCKI) and 344-483 (CHKE…MVDM). Positions 216, 220, 388, and 392 each coordinate Mg(2+). Residue S413 participates in substrate binding.

Belongs to the ketol-acid reductoisomerase family. Mg(2+) is required as a cofactor.

The catalysed reaction is (2R)-2,3-dihydroxy-3-methylbutanoate + NADP(+) = (2S)-2-acetolactate + NADPH + H(+). The enzyme catalyses (2R,3R)-2,3-dihydroxy-3-methylpentanoate + NADP(+) = (S)-2-ethyl-2-hydroxy-3-oxobutanoate + NADPH + H(+). It participates in amino-acid biosynthesis; L-isoleucine biosynthesis; L-isoleucine from 2-oxobutanoate: step 2/4. Its pathway is amino-acid biosynthesis; L-valine biosynthesis; L-valine from pyruvate: step 2/4. In terms of biological role, involved in the biosynthesis of branched-chain amino acids (BCAA). Catalyzes an alkyl-migration followed by a ketol-acid reduction of (S)-2-acetolactate (S2AL) to yield (R)-2,3-dihydroxy-isovalerate. In the isomerase reaction, S2AL is rearranged via a Mg-dependent methyl migration to produce 3-hydroxy-3-methyl-2-ketobutyrate (HMKB). In the reductase reaction, this 2-ketoacid undergoes a metal-dependent reduction by NADPH to yield (R)-2,3-dihydroxy-isovalerate. In Buchnera aphidicola subsp. Schlechtendalia chinensis, this protein is Ketol-acid reductoisomerase (NADP(+)).